The following is a 419-amino-acid chain: UDP-arabinose 4-epimerase 1 (419 aa).

The interval 1 to 21 is disordered; the sequence is MFSFGRARSQGRQNRSMSLGG. The Cytoplasmic segment spans residues 1-32; sequence MFSFGRARSQGRQNRSMSLGGLDYADPKKKNN. The chain crosses the membrane as a helical; Signal-anchor for type II membrane protein span at residues 33 to 51; sequence YLGKILLTASLTALCIFML. Residues 52–419 lie on the Lumenal side of the membrane; the sequence is KQSPTFNTPS…GLTTSSVSVY (368 aa). 72-103 lines the NAD(+) pocket; sequence HVLVTGGAGYIGSHAALRLLKESYRVTIVDNL. The active-site Proton acceptor is tyrosine 220.

It belongs to the NAD(P)-dependent epimerase/dehydratase family. It depends on NAD(+) as a cofactor. High expression in roots. Also found in leaves, stems, flowers, and siliques.

It is found in the golgi apparatus. The protein resides in the golgi stack membrane. It catalyses the reaction UDP-beta-L-arabinopyranose = UDP-alpha-D-xylose. The protein operates within nucleotide-sugar biosynthesis; UDP-L-arabinose biosynthesis; UDP-L-arabinose from UDP-alpha-D-xylose: step 1/1. It functions in the pathway cell wall biogenesis; cell wall polysaccharide biosynthesis. Acts as a UDP-D-xylose 4-epimerase but lacks both UDP-D-glucose and UDP-D-glucuronic acid 4-epimerase activities in vitro. This Arabidopsis thaliana (Mouse-ear cress) protein is UDP-arabinose 4-epimerase 1.